Reading from the N-terminus, the 410-residue chain is LL-diaminopimelate aminotransferase (410 aa).

2 residues coordinate substrate: tyrosine 15 and glycine 42. Residues tyrosine 72, 108 to 109 (SK), tyrosine 132, asparagine 187, tyrosine 218, and 246 to 248 (SFS) each bind pyridoxal 5'-phosphate. Lysine 109, tyrosine 132, and asparagine 187 together coordinate substrate. The residue at position 249 (lysine 249) is an N6-(pyridoxal phosphate)lysine. 2 residues coordinate pyridoxal 5'-phosphate: arginine 257 and asparagine 292. Substrate-binding residues include asparagine 292 and arginine 388.

It belongs to the class-I pyridoxal-phosphate-dependent aminotransferase family. LL-diaminopimelate aminotransferase subfamily. As to quaternary structure, homodimer. Pyridoxal 5'-phosphate serves as cofactor.

It carries out the reaction (2S,6S)-2,6-diaminopimelate + 2-oxoglutarate = (S)-2,3,4,5-tetrahydrodipicolinate + L-glutamate + H2O + H(+). Its pathway is amino-acid biosynthesis; L-lysine biosynthesis via DAP pathway; LL-2,6-diaminopimelate from (S)-tetrahydrodipicolinate (aminotransferase route): step 1/1. In terms of biological role, involved in the synthesis of meso-diaminopimelate (m-DAP or DL-DAP), required for both lysine and peptidoglycan biosynthesis. Catalyzes the direct conversion of tetrahydrodipicolinate to LL-diaminopimelate. This Thermosynechococcus vestitus (strain NIES-2133 / IAM M-273 / BP-1) protein is LL-diaminopimelate aminotransferase.